Consider the following 287-residue polypeptide: uncharacterized protein (287 aa).

Positions 183–281 constitute an HTH araC/xylS-type domain; that stretch reads WEAARYLQEH…GISPIEYRKI (99 aa). 2 DNA-binding regions (H-T-H motif) span residues 200–221 and 248–271; these read KDLSLALHYHQDYVSRCMQQVL and MGVIAETVGMEDPTYFSKLFKQIE.

This is an uncharacterized protein from Bacillus subtilis (strain 168).